Reading from the N-terminus, the 420-residue chain is Tol-Pal system protein TolB (420 aa).

The signal sequence occupies residues 1 to 21 (MKLFVHLVLFISLFIPYFTKA).

Belongs to the TolB family. In terms of assembly, the Tol-Pal system is composed of five core proteins: the inner membrane proteins TolA, TolQ and TolR, the periplasmic protein TolB and the outer membrane protein Pal. They form a network linking the inner and outer membranes and the peptidoglycan layer.

It is found in the periplasm. Part of the Tol-Pal system, which plays a role in outer membrane invagination during cell division and is important for maintaining outer membrane integrity. This is Tol-Pal system protein TolB from Wolbachia pipientis wMel.